We begin with the raw amino-acid sequence, 335 residues long: Cathepsin B-like cysteine proteinase 4 (335 aa).

An N-terminal signal peptide occupies residues 1–15 (MKYLILAALVAVTAG). A propeptide spanning residues 16–80 (LVIPLVPKTQ…VVKHDINEDT (65 aa)) is cleaved from the precursor. Disulfide bonds link C94–C123, C106–C150, C142–C209, C143–C146, C179–C213, and C187–C199. Residue C109 is part of the active site. An N-linked (GlcNAc...) asparagine glycan is attached at N193. Residues H281 and N301 contribute to the active site.

The protein belongs to the peptidase C1 family.

It is found in the secreted. Thiol protease which shows activity against the fluorogenic substrate z-Arg-Arg-AMC. The polypeptide is Cathepsin B-like cysteine proteinase 4 (cpr-4) (Caenorhabditis elegans).